The sequence spans 785 residues: Adhesion G-protein coupled receptor G7 (785 aa).

Positions 1–26 (MRSCRSCNVRVLVAIVCGLLTGIVLG) are cleaved as a signal peptide. Over 27–435 (LGIWRMVIRI…KYPKSLDILS (409 aa)) the chain is Extracellular. Residues N82, N122, N133, N152, N159, N178, N195, N239, N289, N348, N400, and N408 are each glycosylated (N-linked (GlcNAc...) asparagine). One can recognise a GAIN-B domain in the interval 271–425 (FSVQKGSSNS…AVLMSFKKDY (155 aa)). Cystine bridges form between C380/C407 and C395/C409. A GPS region spans residues 380–425 (CVYWNFLINDWDTQGCQKTGNTTEFLRCNCSHTTNFAVLMSFKKDY). A helical transmembrane segment spans residues 436–456 (NIGCALSIAGLALTILFQILT). Residues 457 to 465 (RKIRKTSVT) are Cytoplasmic-facing. Residues 466-486 (WVLVSLCSSMLIFNLLFVFGI) form a helical membrane-spanning segment. Residues 487-523 (ENSNKNLKTSDSDINVKPENNKIPESDTIETPNPSCT) lie on the Extracellular side of the membrane. A helical transmembrane segment spans residues 524–544 (AIAALLHYFLLVTFTWNGLSA). Residues 545-561 (TQLYFLLIRTMKPLPRH) lie on the Cytoplasmic side of the membrane. Residues 562 to 582 (FIIFISLVGWGVPAIIVGVTI) form a helical membrane-spanning segment. At 583 to 623 (GSIYALSGNKRYWELDYRQEEICWLAVPKDNDYARSPLLWS) the chain is on the extracellular side. Residues 624-644 (FIIPVTIILITNITIFVIITV) traverse the membrane as a helical segment. Topologically, residues 645–668 (KVLWKNNQNLTSTKKVSSLKKVFS) are cytoplasmic. The helical transmembrane segment at 669 to 689 (TLSIAVVFGVTWILAYAMLIS) threads the bilayer. Residues 690–694 (NDDIR) lie on the Extracellular side of the membrane. Residues 695-715 (IVFSYIFCLFNTTQGLQIFIL) traverse the membrane as a helical segment. The Cytoplasmic segment spans residues 716–785 (YTVRTKVFQS…SGMTEETSLS (70 aa)).

This sequence belongs to the G-protein coupled receptor 2 family. Adhesion G-protein coupled receptor (ADGR) subfamily. As to expression, selectively expressed in the intestinal tissues.

The protein localises to the membrane. Orphan receptor. This is Adhesion G-protein coupled receptor G7 (Adgrg7) from Mus musculus (Mouse).